We begin with the raw amino-acid sequence, 302 residues long: tRNA pseudouridine synthase B (302 aa).

The Nucleophile role is filled by aspartate 40.

This sequence belongs to the pseudouridine synthase TruB family. Type 1 subfamily.

The enzyme catalyses uridine(55) in tRNA = pseudouridine(55) in tRNA. Its function is as follows. Responsible for synthesis of pseudouridine from uracil-55 in the psi GC loop of transfer RNAs. The polypeptide is tRNA pseudouridine synthase B (Shouchella clausii (strain KSM-K16) (Alkalihalobacillus clausii)).